The following is a 434-amino-acid chain: Oxysterol-binding protein homolog 4 (434 aa).

The segment at 7-29 (SSSWTSFLKSIASFNGDLSSLSA) is ALPS motif. The segment at 16–366 (SIASFNGDLS…WQRRWFKDFD (351 aa)) is OSBP-related domain (ORD). Position 24-29 (24-29 (LSSLSA)) interacts with a 1,2-diacyl-sn-glycero-3-phospho-(1D-myo-inositol 4-phosphate). A 20-hydroxycholesterol-binding site is contributed by Gln96. Gln96 lines the 25-hydroxycholesterol pocket. Gln96 and Arg100 together coordinate 7beta-hydroxycholesterol. Gln96 contributes to the cholesterol binding site. Gln96 provides a ligand contact to ergosterol. Residues 109–112 (KPLN), 143–144 (HH), Lys336, Glu340, and Arg344 contribute to the a 1,2-diacyl-sn-glycero-3-phospho-(1D-myo-inositol 4-phosphate) site. A Phosphothreonine modification is found at Thr370. Phosphoserine is present on Ser389.

The protein belongs to the OSBP family.

Its subcellular location is the cytoplasm. The protein resides in the golgi apparatus membrane. Its function is as follows. Lipid transport protein (LTP) involved in non-vesicular transfer of lipids between membranes. Functions in phosphoinositide-coupled directional transport of various lipids by carrying the lipid molecule in a hydrophobic pocket and transferring it between membranes through the cytosol. Involved in maintenance of intracellular sterol distribution and homeostasis. Involved in lipid countertransport between the Golgi complex and membranes of the endoplasmic reticulum. Specifically exchanges sterol with phosphatidylinositol 4-phosphate (PI4P), delivering sterol to the Golgi in exchange for PI4P, which is delivered to the ER-localized PI4P phosphatase SAC1 for degradation. Thus, by maintaining a PI4P gradient at the ER/Golgi interface, SAC1 may drive PS transport. Displays a similar affinity for PI4P and sterols. Binds sterol and PI4P in a mutually exclusive manner. Involved in ergosterol transport from the plasma membrane (PM) to the ER. Mediates sterol transport from the ER to mitochondria. Involved in the negative regulation of Golgi-derived transport vesicle biogenesis. Plays a role in the positive regulation of vesicular transport of ceramide from the ER to the Golgi, negatively regulating COPII-mediated ER export of cargos. In Saccharomyces cerevisiae (strain ATCC 204508 / S288c) (Baker's yeast), this protein is Oxysterol-binding protein homolog 4.